The sequence spans 157 residues: 2-C-methyl-D-erythritol 2,4-cyclodiphosphate synthase (157 aa).

A divalent metal cation is bound by residues Asp-8 and His-10. 4-CDP-2-C-methyl-D-erythritol 2-phosphate contacts are provided by residues 8–10 (DVH) and 34–35 (HS). Residue His-42 coordinates a divalent metal cation. 4-CDP-2-C-methyl-D-erythritol 2-phosphate contacts are provided by residues 56–58 (DIG), 61–65 (FPDTD), 100–106 (AQAPKMA), 132–135 (TTTE), Phe-139, and Arg-142.

This sequence belongs to the IspF family. As to quaternary structure, homotrimer. Requires a divalent metal cation as cofactor.

It catalyses the reaction 4-CDP-2-C-methyl-D-erythritol 2-phosphate = 2-C-methyl-D-erythritol 2,4-cyclic diphosphate + CMP. Its pathway is isoprenoid biosynthesis; isopentenyl diphosphate biosynthesis via DXP pathway; isopentenyl diphosphate from 1-deoxy-D-xylulose 5-phosphate: step 4/6. Involved in the biosynthesis of isopentenyl diphosphate (IPP) and dimethylallyl diphosphate (DMAPP), two major building blocks of isoprenoid compounds. Catalyzes the conversion of 4-diphosphocytidyl-2-C-methyl-D-erythritol 2-phosphate (CDP-ME2P) to 2-C-methyl-D-erythritol 2,4-cyclodiphosphate (ME-CPP) with a corresponding release of cytidine 5-monophosphate (CMP). The sequence is that of 2-C-methyl-D-erythritol 2,4-cyclodiphosphate synthase from Pseudomonas aeruginosa (strain ATCC 15692 / DSM 22644 / CIP 104116 / JCM 14847 / LMG 12228 / 1C / PRS 101 / PAO1).